Here is a 65-residue protein sequence, read N- to C-terminus: Large ribosomal subunit protein bL35 (65 aa).

A disordered region spans residues 1 to 21 (MPKMKTKSGAAKRFTVRAGGT).

Belongs to the bacterial ribosomal protein bL35 family.

The polypeptide is Large ribosomal subunit protein bL35 (Nitrosospira multiformis (strain ATCC 25196 / NCIMB 11849 / C 71)).